We begin with the raw amino-acid sequence, 200 residues long: MEEKKTGTTTVGIKVKEGVVLAADTQASLGNMVETLNIRKILPITDRIAITTAGSVGDVQALARMLEAQARYYQFTWGRPMTTRAMANLLSNILNENKWFPYMVQIIIGGYVDKPELASVDALGGLVFEKYTATGSGSPFAIAIIEDGYREDMSIEEAKELAVRAVKTAGKRDVYTGERKVQVVVITKDGMKEEFVEFKE.

The propeptide at M1–G7 is removed in mature form; by autocatalysis. The active-site Nucleophile is T8.

Belongs to the peptidase T1B family. The 20S proteasome core is composed of 14 alpha and 14 beta subunits that assemble into four stacked heptameric rings, resulting in a barrel-shaped structure. The two inner rings, each composed of seven catalytic beta subunits, are sandwiched by two outer rings, each composed of seven alpha subunits. The catalytic chamber with the active sites is on the inside of the barrel. Has a gated structure, the ends of the cylinder being occluded by the N-termini of the alpha-subunits. Is capped at one or both ends by the proteasome regulatory ATPase, PAN.

Its subcellular location is the cytoplasm. The catalysed reaction is Cleavage of peptide bonds with very broad specificity.. The formation of the proteasomal ATPase PAN-20S proteasome complex, via the docking of the C-termini of PAN into the intersubunit pockets in the alpha-rings, triggers opening of the gate for substrate entry. Interconversion between the open-gate and close-gate conformations leads to a dynamic regulation of the 20S proteasome proteolysis activity. In terms of biological role, component of the proteasome core, a large protease complex with broad specificity involved in protein degradation. The chain is Proteasome subunit beta 2 from Thermococcus gammatolerans (strain DSM 15229 / JCM 11827 / EJ3).